Reading from the N-terminus, the 457-residue chain is tRNA modification GTPase MnmE (457 aa).

(6S)-5-formyl-5,6,7,8-tetrahydrofolate is bound by residues arginine 22, glutamate 86, and arginine 125. The TrmE-type G domain occupies 221-381 (GLRAVLAGRP…LEAEVARVAG (161 aa)). Asparagine 231 provides a ligand contact to K(+). GTP contacts are provided by residues 231–236 (NVGKSS), 250–256 (TPIPGTT), and 275–278 (DTAG). Serine 235 serves as a coordination point for Mg(2+). 3 residues coordinate K(+): threonine 250, isoleucine 252, and threonine 255. A Mg(2+)-binding site is contributed by threonine 256. Lysine 457 lines the (6S)-5-formyl-5,6,7,8-tetrahydrofolate pocket.

This sequence belongs to the TRAFAC class TrmE-Era-EngA-EngB-Septin-like GTPase superfamily. TrmE GTPase family. Homodimer. Heterotetramer of two MnmE and two MnmG subunits. Requires K(+) as cofactor.

The protein resides in the cytoplasm. Exhibits a very high intrinsic GTPase hydrolysis rate. Involved in the addition of a carboxymethylaminomethyl (cmnm) group at the wobble position (U34) of certain tRNAs, forming tRNA-cmnm(5)s(2)U34. The chain is tRNA modification GTPase MnmE from Symbiobacterium thermophilum (strain DSM 24528 / JCM 14929 / IAM 14863 / T).